We begin with the raw amino-acid sequence, 1734 residues long: Gag-pol polyprotein (1734 aa).

Glycine 2 is lipidated: N-myristoyl glycine; by host. A PTAP/PSAP motif motif is present at residues proline 109–proline 112. The disordered stretch occupies residues proline 112–arginine 217. The LYPX(n)L motif motif lies at leucine 128–phenylalanine 132. The PPXY motif motif lies at proline 161–tyrosine 164. Phosphoserine; by host is present on serine 191. Residues glycine 344–valine 392 are interaction with host PIAS4. The segment at isoleucine 429 to glutamate 434 is interaction with host UBE2I. Basic and acidic residues-rich tracts occupy residues arginine 433–serine 474 and arginine 485–leucine 498. 2 disordered regions span residues arginine 433–leucine 498 and tryptophan 512–isoleucine 551. The CCHC-type zinc-finger motif lies at aspartate 501 to lysine 518. The region spanning valine 560–leucine 630 is the Peptidase A2 domain. Aspartate 565 acts as the Protease; shared with dimeric partner in catalysis. A Reverse transcriptase domain is found at leucine 740–leucine 931. Mg(2+) contacts are provided by aspartate 808, aspartate 882, aspartate 883, aspartate 1182, glutamate 1220, aspartate 1241, and aspartate 1311. Positions proline 1173–isoleucine 1319 constitute an RNase H type-1 domain. The segment at histidine 1386–cysteine 1426 adopts an HHCC-type zinc-finger fold. One can recognise an Integrase catalytic domain in the interval arginine 1443–proline 1601. Mg(2+) is bound by residues aspartate 1454 and aspartate 1513.

As to quaternary structure, homohexamer; further associates as homomultimer. The virus core is composed of a lattice formed from hexagonal rings, each containing six capsid monomers. Interacts with mouse UBE2I and mouse PIAS4. Interacts (via PPXY motif) with host NEDD4. Interacts (via PSAP motif) with host TSG101. Interacts (via LYPX(n)L motif) with host PDCD6IP. In terms of assembly, the reverse transcriptase is a monomer (Potential). Interacts (via RNase domains) with host release factor ETF1; this interaction is essential for translational readthrough of amber codon between viral gag and pol genes, as well as for viral replication. As to quaternary structure, homodimer. It depends on Mg(2+) as a cofactor. In terms of processing, ubiquitinated by ITCH. Gag can recruit the ubiquitin ligase Itch in an L domain-independent manner to facilitate virus release via a mechanism that involves Gag ubiquitination. Post-translationally, specific enzymatic cleavages by the viral protease yield mature proteins. The protease is released by autocatalytic cleavage. The polyprotein is cleaved during and after budding, this process is termed maturation. Sumoylated; which is required for virus replication. In terms of processing, phosphorylated on serine residues.

It is found in the virion. The protein resides in the host cell membrane. Its subcellular location is the host late endosome membrane. It localises to the host endosome. The protein localises to the host multivesicular body. It is found in the host cytoplasm. The enzyme catalyses DNA(n) + a 2'-deoxyribonucleoside 5'-triphosphate = DNA(n+1) + diphosphate. It catalyses the reaction Endonucleolytic cleavage to 5'-phosphomonoester.. Most efficiently inhibited by Amprenavir, which is able to block Gag-Pol processing in infected cells. In terms of biological role, plays a role in budding and is processed by the viral protease during virion maturation outside the cell. During budding, it recruits, in a PPXY-dependent or independent manner, Nedd4-like ubiquitin ligases that conjugate ubiquitin molecules to Gag-Pol, or to Gag-Pol binding host factors. Interaction with HECT ubiquitin ligases probably links the viral protein to the host ESCRT pathway and facilitates release. Targets Gag and gag-pol polyproteins to the plasma membrane via a multipartite membrane binding signal, that includes its myristoylated N-terminus. Also mediates nuclear localization of the pre-integration complex. Functionally, constituent of the pre-integration complex (PIC) which tethers the latter to mitotic chromosomes. This allows the integration of the viral genome into the host DNA. Its function is as follows. Forms the spherical core of the virion that encapsulates the genomic RNA-nucleocapsid complex. In terms of biological role, involved in the packaging and encapsidation of two copies of the genome. Binds with high affinity to conserved UCUG elements within the packaging signal, located near the 5'-end of the genome. This binding is dependent on genome dimerization. Acts as a nucleic acid chaperone which is involved in rearrangement of nucleic acid secondary structures during gRNA retrotranscription. The aspartyl protease mediates proteolytic cleavages of Gag and Gag-Pol polyproteins during or shortly after the release of the virion from the plasma membrane. Cleavages take place as an ordered, step-wise cascade to yield mature proteins. This process is called maturation. Displays maximal activity during the budding process just prior to particle release from the cell (Potential). Cleaves the translation initiation factor eIF4G leading to the inhibition of host cap-dependent translation. Functionally, RT is a multifunctional enzyme that converts the viral dimeric RNA genome into dsDNA in the cytoplasm, shortly after virus entry into the cell. This enzyme displays a DNA polymerase activity that can copy either DNA or RNA templates, and a ribonuclease H (RNase H) activity that cleaves the RNA strand of RNA-DNA heteroduplexes in a partially processive 3' to 5' endonucleasic mode. Conversion of viral genomic RNA into dsDNA requires many steps. A tRNA binds to the primer-binding site (PBS) situated at the 5' end of the viral RNA. RT uses the 3' end of the tRNA primer to perform a short round of RNA-dependent minus-strand DNA synthesis. The reading proceeds through the U5 region and ends after the repeated (R) region which is present at both ends of viral RNA. The portion of the RNA-DNA heteroduplex is digested by the RNase H, resulting in a ssDNA product attached to the tRNA primer. This ssDNA/tRNA hybridizes with the identical R region situated at the 3' end of viral RNA. This template exchange, known as minus-strand DNA strong stop transfer, can be either intra- or intermolecular. RT uses the 3' end of this newly synthesized short ssDNA to perform the RNA-dependent minus-strand DNA synthesis of the whole template. RNase H digests the RNA template except for a polypurine tract (PPT) situated at the 5' end of the genome. It is not clear if both polymerase and RNase H activities are simultaneous. RNase H probably can proceed both in a polymerase-dependent (RNA cut into small fragments by the same RT performing DNA synthesis) and a polymerase-independent mode (cleavage of remaining RNA fragments by free RTs). Secondly, RT performs DNA-directed plus-strand DNA synthesis using the PPT that has not been removed by RNase H as primers. PPT and tRNA primers are then removed by RNase H. The 3' and 5' ssDNA PBS regions hybridize to form a circular dsDNA intermediate. Strand displacement synthesis by RT to the PBS and PPT ends produces a blunt ended, linear dsDNA copy of the viral genome that includes long terminal repeats (LTRs) at both ends. Its function is as follows. Catalyzes viral DNA integration into the host chromosome, by performing a series of DNA cutting and joining reactions. This enzyme activity takes place after virion entry into a cell and reverse transcription of the RNA genome in dsDNA. The first step in the integration process is 3' processing. This step requires a complex comprising the viral genome, matrix protein and integrase. This complex is called the pre-integration complex (PIC). The integrase protein removes 2 nucleotides from each 3' end of the viral DNA, leaving recessed CA OH's at the 3' ends. In the second step that requires cell division, the PIC enters cell nucleus. In the third step, termed strand transfer, the integrase protein joins the previously processed 3' ends to the 5' ends of strands of target cellular DNA at the site of integration. The last step is viral DNA integration into host chromosome. This Mus musculus (Mouse) protein is Gag-pol polyprotein (gag-pol).